A 77-amino-acid polypeptide reads, in one-letter code: MERGMRLFSSLVLVLLLVTATEMGPKVAEARTCESQSHRFKGACLSDTNCASVCQTEGFPAGDCKGARRRCFCVKPC.

Positions 1–30 are cleaved as a signal peptide; that stretch reads MERGMRLFSSLVLVLLLVTATEMGPKVAEA. 4 cysteine pairs are disulfide-bonded: cysteine 33–cysteine 77, cysteine 44–cysteine 64, cysteine 50–cysteine 71, and cysteine 54–cysteine 73.

This sequence belongs to the DEFL family.

The protein resides in the secreted. In Nelumbo nucifera (Sacred lotus), this protein is Defensin-like protein.